The following is a 98-amino-acid chain: Small ribosomal subunit protein uS19 (98 aa).

Residues 74-98 (FAPTRNYRGHAGGKSEKGGSAPRKK) are disordered.

This sequence belongs to the universal ribosomal protein uS19 family.

Protein S19 forms a complex with S13 that binds strongly to the 16S ribosomal RNA. The sequence is that of Small ribosomal subunit protein uS19 from Chlorobium chlorochromatii (strain CaD3).